The following is a 102-amino-acid chain: Large ribosomal subunit protein uL23 (102 aa).

Belongs to the universal ribosomal protein uL23 family. In terms of assembly, part of the 50S ribosomal subunit. Contacts protein L29, and trigger factor when it is bound to the ribosome.

Its function is as follows. One of the early assembly proteins it binds 23S rRNA. One of the proteins that surrounds the polypeptide exit tunnel on the outside of the ribosome. Forms the main docking site for trigger factor binding to the ribosome. This is Large ribosomal subunit protein uL23 from Paramagnetospirillum magneticum (strain ATCC 700264 / AMB-1) (Magnetospirillum magneticum).